The sequence spans 123 residues: Small ribosomal subunit protein uS12c (123 aa).

Belongs to the universal ribosomal protein uS12 family. In terms of assembly, part of the 30S ribosomal subunit.

Its subcellular location is the plastid. It is found in the chloroplast. Its function is as follows. With S4 and S5 plays an important role in translational accuracy. Located at the interface of the 30S and 50S subunits. The polypeptide is Small ribosomal subunit protein uS12c (rps12) (Chaetosphaeridium globosum (Charophycean green alga)).